Consider the following 1208-residue polypeptide: MEPLLLGRGLIVYLMFLLLKFSKAIEIPSSVQQVPTIIKQSKVQVAFPFDEYFQIECEAKGNPEPTFSWTKDGNPFYFTDHRIIPSNNSGTFRIPNEGHISHFQGKYRCFASNKLGIAMSEEIEFIVPSVPKFPKEKIDPLEVEEGDPIVLPCNPPKGLPPLHIYWMNIELEHIEQDERVYMSQKGDLYFANVEEKDSRNDYCCFAAFPRLRTIVQKMPMKLTVNSSNSIKQRKPKLLLPPTESGSESSITILKGEILLLECFAEGLPTPQVDWNKIGGDLPKGRETKENYGKTLKIENVSYQDKGNYRCTASNFLGTATHDFHVIVEEPPRWTKKPQSAVYSTGSNGILLCEAEGEPQPTIKWRVNGSPVDNHPFAGDVVFPREISFTNLQPNHTAVYQCEASNVHGTILANANIDVVDVRPLIQTKDGENYATVVGYSAFLHCEFFASPEAVVSWQKVEEVKPLEGRRYHIYENGTLQINRTTEEDAGSYSCWVENAIGKTAVTANLDIRNATKLRVSPKNPRIPKLHMLELHCESKCDSHLKHSLKLSWSKDGEAFEINGTEDGRIIIDGANLTISNVTLEDQGIYCCSAHTALDSAADITQVTVLDVPDPPENLHLSERQNRSVRLTWEAGADHNSNISEYIVEFEGNKEEPGRWEELTRVQGKKTTVILPLAPFVRYQFRVIAVNEVGRSQPSQPSDHHETPPAAPDRNPQNIRVQASQPKEMIIKWEPLKSMEQNGPGLEYRVTWKPQGAPVEWEEETVTNHTLRVMTPAVYAPYDVKVQAINQLGSGPDPQSVTLYSGEDYPDTAPVIHGVDVINSTLVKVTWSTVPKDRVHGRLKGYQINWWKTKSLLDGRTHPKEVNILRFSGQRNSGMVPSLDAFSEFHLTVLAYNSKGAGPESEPYIFQTPEGVPEQPTFLKVIKVDKDTATLSWGLPKKLNGNLTGYLLQYQIINDTYEIGELNDINITTPSKPSWHLSNLNATTKYKFYLRACTSQGCGKPITEESSTLGEGSKGIGKISGVNLTQKTHPIEVFEPGAEHIVRLMTKNWGDNDSIFQDVIETRGREYAGLYDDISTQGWFIGLMCAIALLTLLLLTVCFVKRNRGGKYSVKEKEDLHPDPEIQSVKDETFGEYSDSDEKPLKGSLRSLNRDMQPTESADSLVEYGEGDHGLFSEDGSFIGAYAGSKEKGSVESNGSSTATFPLRA.

The signal sequence occupies residues 1-24; sequence MEPLLLGRGLIVYLMFLLLKFSKA. Residues 25-1082 lie on the Extracellular side of the membrane; the sequence is IEIPSSVQQV…LYDDISTQGW (1058 aa). Ig-like C2-type domains follow at residues 35-124 and 128-223; these read PTII…EEIE and PSVP…MKLT. 2 disulfides stabilise this stretch: cysteine 57/cysteine 109 and cysteine 153/cysteine 204. N-linked (GlcNAc...) asparagine glycosylation is found at lysine 231 and asparagine 299. 4 Ig-like C2-type domains span residues 235–328, 331–417, 423–510, and 515–607; these read PKLL…VIVE, PRWT…ANID, PLIQ…ANLD, and TKLR…TQVT. 4 cysteine pairs are disulfide-bonded: cysteine 262-cysteine 310, cysteine 352-cysteine 401, cysteine 445-cysteine 494, and cysteine 536-cysteine 591. Asparagine 476 and asparagine 482 each carry an N-linked (GlcNAc...) asparagine glycan. A DGEA motif is present at residues 555–558; sequence DGEA. Residues asparagine 562 and asparagine 580 are each glycosylated (N-linked (GlcNAc...) asparagine). 4 Fibronectin type-III domains span residues 614-709, 714-807, 809-914, and 918-1015; these read PPEN…TPPA, NPQN…SGED, PDTA…TPEG, and QPTF…LGEG. Residues 693 to 716 form a disordered region; the sequence is GRSQPSQPSDHHETPPAAPDRNPQ. Residues asparagine 767, asparagine 822, asparagine 945, and asparagine 1026 are each glycosylated (N-linked (GlcNAc...) asparagine). Residues 1083–1103 traverse the membrane as a helical segment; the sequence is FIGLMCAIALLTLLLLTVCFV. Over 1104–1208 the chain is Cytoplasmic; sequence KRNRGGKYSV…SSTATFPLRA (105 aa). Residues 1131–1163 are disordered; the sequence is ETFGEYSDSDEKPLKGSLRSLNRDMQPTESADS. Phosphoserine is present on residues serine 1147, serine 1160, and serine 1180. The span at 1149-1161 shows a compositional bias: polar residues; that stretch reads RSLNRDMQPTESA. The FIG[AQ]Y motif lies at 1181–1185; it reads FIGAY. The segment at 1189 to 1208 is disordered; it reads KEKGSVESNGSSTATFPLRA. Residues 1194 to 1208 are compositionally biased toward polar residues; the sequence is VESNGSSTATFPLRA.

This sequence belongs to the immunoglobulin superfamily. L1/neurofascin/NgCAM family. In terms of assembly, may interact with L1CAM. May interact with ITGB1/ITGA1 heterodimer and ITGB1/ITGA2 heterodimer as well as with ANK3. Post-translationally, cleavage by metalloprotease ADAM8 in the extracellular part generates 2 soluble forms (125 kDa and 165 kDa) in vitro and is inhibited by metalloprotease inhibitors. Cleaved by BACE1. In terms of processing, N-glycosylated. Contains N-linked oligosaccharides with a sulfated carbohydrate structure type HNK-1 (SO4-3-GlcUABeta1,3GalBeta1,4GlcNAc). O-glycosylated. As to expression, expressed in the fetal and adult brain as well as in Schwann cell culture. Also detected in adult peripheral tissues.

Its subcellular location is the cell membrane. It is found in the secreted. The protein resides in the extracellular space. It localises to the extracellular matrix. In terms of biological role, extracellular matrix and cell adhesion protein that plays a role in nervous system development and in synaptic plasticity. Both soluble and membranous forms promote neurite outgrowth of cerebellar and hippocampal neurons and suppress neuronal cell death. Plays a role in neuronal positioning of pyramidal neurons and in regulation of both the number of interneurons and the efficacy of GABAergic synapses. May play a role in regulating cell migration in nerve regeneration and cortical development. Potentiates integrin-dependent cell migration towards extracellular matrix proteins. Recruits ANK3 to the plasma membrane. The sequence is that of Neural cell adhesion molecule L1-like protein (CHL1) from Homo sapiens (Human).